A 363-amino-acid chain; its full sequence is 3-dehydroquinate synthase (363 aa).

NAD(+)-binding positions include 74-79, 108-112, 132-133, lysine 145, lysine 154, and 172-175; these read DGEQYK, GVIGD, TT, and CLKT. Residues glutamate 187, histidine 250, and histidine 267 each coordinate Zn(2+).

The protein belongs to the sugar phosphate cyclases superfamily. Dehydroquinate synthase family. The cofactor is NAD(+). Requires Co(2+) as cofactor. Zn(2+) serves as cofactor.

It localises to the cytoplasm. The enzyme catalyses 7-phospho-2-dehydro-3-deoxy-D-arabino-heptonate = 3-dehydroquinate + phosphate. It participates in metabolic intermediate biosynthesis; chorismate biosynthesis; chorismate from D-erythrose 4-phosphate and phosphoenolpyruvate: step 2/7. In terms of biological role, catalyzes the conversion of 3-deoxy-D-arabino-heptulosonate 7-phosphate (DAHP) to dehydroquinate (DHQ). This is 3-dehydroquinate synthase from Buchnera aphidicola subsp. Acyrthosiphon pisum (strain APS) (Acyrthosiphon pisum symbiotic bacterium).